The primary structure comprises 121 residues: Ribonuclease P protein component (121 aa).

Belongs to the RnpA family. As to quaternary structure, consists of a catalytic RNA component (M1 or rnpB) and a protein subunit.

It catalyses the reaction Endonucleolytic cleavage of RNA, removing 5'-extranucleotides from tRNA precursor.. RNaseP catalyzes the removal of the 5'-leader sequence from pre-tRNA to produce the mature 5'-terminus. It can also cleave other RNA substrates such as 4.5S RNA. The protein component plays an auxiliary but essential role in vivo by binding to the 5'-leader sequence and broadening the substrate specificity of the ribozyme. In Oceanobacillus iheyensis (strain DSM 14371 / CIP 107618 / JCM 11309 / KCTC 3954 / HTE831), this protein is Ribonuclease P protein component.